Consider the following 643-residue polypeptide: Alpha-dioxygenase PIOX (643 aa).

Histidine 168 functions as the Proton acceptor in the catalytic mechanism. Ca(2+) is bound at residue aspartate 169. A heme b-binding site is contributed by histidine 173. Threonine 221, tryptophan 223, aspartate 225, and serine 227 together coordinate Ca(2+). Heme b-binding residues include histidine 393, arginine 490, and arginine 494.

The protein belongs to the peroxidase family. Heme b is required as a cofactor. It depends on Ca(2+) as a cofactor.

The enzyme catalyses hexadecanoate + O2 = (2R)-2-hydroperoxyhexadecanoate. It carries out the reaction dodecanoate + O2 = (2R)-2-hydroperoxydodecanoate. Alpha-dioxygenase that catalyzes the primary oxygenation step of a variety of 14-20 carbon fatty acids, containing up to three unsaturated bonds, into their corresponding 2R-hydroperoxides. Involved in the production of oxylipins that function in cell signaling, wound healing, and protection from infection. The alpha-oxidation pathway of fatty acids may play a role during plant developmental processes. The sequence is that of Alpha-dioxygenase PIOX from Pisum sativum (Garden pea).